The chain runs to 813 residues: Ribosome-releasing factor 2, mitochondrial (813 aa).

A mitochondrion-targeting transit peptide spans 1–20 (MLRIVWKPLKIRLPVWRRYQ). The tr-type G domain maps to 26–314 (NSIRNVGIIA…AIIDYLPSPV (289 aa)). Residues 35–42 (AHIDAGKT), 99–103 (DTPGH), and 153–156 (NKMD) contribute to the GTP site.

Belongs to the TRAFAC class translation factor GTPase superfamily. Classic translation factor GTPase family. EF-G/EF-2 subfamily.

The protein localises to the mitochondrion. Its function is as follows. Mitochondrial GTPase that mediates the disassembly of ribosomes from messenger RNA at the termination of mitochondrial protein biosynthesis. Not involved in the GTP-dependent ribosomal translocation step during translation elongation. This chain is Ribosome-releasing factor 2, mitochondrial (mef2), found in Schizosaccharomyces pombe (strain 972 / ATCC 24843) (Fission yeast).